Consider the following 730-residue polypeptide: Catalase-peroxidase (730 aa).

A disordered region spans residues 1–25 (MEEKKCPVTGHTQHTPTGGGTKNKD). The tryptophyl-tyrosyl-methioninium (Trp-Tyr) (with M-244) cross-link spans 95-218 (WHSAGTYRLN…LAAVQMGLIY (124 aa)). The active-site Proton acceptor is His-96. The segment at residues 218-244 (YVNPEGPNGQPSVLASGRDVRDTFKRM) is a cross-link (tryptophyl-tyrosyl-methioninium (Tyr-Met) (with W-95)). Heme b is bound at residue His-259.

This sequence belongs to the peroxidase family. Peroxidase/catalase subfamily. As to quaternary structure, homodimer or homotetramer. It depends on heme b as a cofactor. Post-translationally, formation of the three residue Trp-Tyr-Met cross-link is important for the catalase, but not the peroxidase activity of the enzyme.

The enzyme catalyses H2O2 + AH2 = A + 2 H2O. It carries out the reaction 2 H2O2 = O2 + 2 H2O. Its function is as follows. Bifunctional enzyme with both catalase and broad-spectrum peroxidase activity. The polypeptide is Catalase-peroxidase (Desulfitobacterium hafniense (strain Y51)).